Here is a 72-residue protein sequence, read N- to C-terminus: Prokaryotic ubiquitin-like protein Pup (72 aa).

Positions 1–10 (MATKDTGGGQ) are enriched in gly residues. The tract at residues 1-45 (MATKDTGGGQQKATRNTEEVEEQAQDAQASEDLKERQEKLSDDVD) is disordered. Residues 9–60 (GQQKATRNTEEVEEQAQDAQASEDLKERQEKLSDDVDSVLDEIDDVLEENAE) adopt a coiled-coil conformation. An ARC ATPase binding region spans residues 28–66 (QASEDLKERQEKLSDDVDSVLDEIDDVLEENAEDFVRSF). A compositionally biased stretch (basic and acidic residues) spans 31 to 42 (EDLKERQEKLSD). Residue E72 forms an Isoglutamyl lysine isopeptide (Glu-Lys) (interchain with K-? in acceptor proteins) linkage.

The protein belongs to the prokaryotic ubiquitin-like protein family. Strongly interacts with the proteasome-associated ATPase ARC through a hydrophobic interface; the interacting region of Pup lies in its C-terminal half. There is one Pup binding site per ARC hexamer ring.

The protein operates within protein degradation; proteasomal Pup-dependent pathway. Functionally, protein modifier that is covalently attached to lysine residues of substrate proteins, thereby targeting them for proteasomal degradation. The tagging system is termed pupylation. In Streptomyces avermitilis (strain ATCC 31267 / DSM 46492 / JCM 5070 / NBRC 14893 / NCIMB 12804 / NRRL 8165 / MA-4680), this protein is Prokaryotic ubiquitin-like protein Pup.